The primary structure comprises 186 residues: Astacin-like metalloprotease toxin 5 (186 aa).

The region spanning 1 to 186 is the Peptidase M12A domain; the sequence is NAVKYDQQLW…CHSKRKAELL (186 aa). 2 disulfide bridges follow: Cys-42–Cys-177 and Cys-63–Cys-84. His-92 provides a ligand contact to Zn(2+). The active site involves Glu-93. Zn(2+) is bound by residues His-96 and His-102. N-linked (GlcNAc...) asparagine glycosylation occurs at Asn-122.

As to quaternary structure, monomer. The cofactor is Zn(2+). Expressed by the venom gland.

It localises to the secreted. Its activity is regulated as follows. Inhibited by 1,10-phenanthroline. Its function is as follows. Zinc metalloprotease. Provoques deadhesion of endothelial cells from cell cultures, and also degradation of fibronectin, fibrinogen and gelatin in vitro. Its role in the venom is not fully understood but it might act as a spreading factor that facilitates diffusion of other venom toxins. Alternatively, it might be involved in the proteolytic processing of other venom toxins or it might play a role in extra-oral digestion of prey. This chain is Astacin-like metalloprotease toxin 5, found in Loxosceles gaucho (Spider).